The chain runs to 730 residues: Sodium-dependent neutral amino acid transporter B(0)AT2 (730 aa).

The disordered stretch occupies residues 1–24 (MPKNSKVVKRELDDDVTESVKDLL). Topologically, residues 1-70 (MPKNSKVVKR…RPAWSSKLQY (70 aa)) are extracellular. Residues Ser-25 and Ser-55 each carry the phosphoserine modification. Transmembrane regions (helical) follow at residues 71–91 (ILAQ…PYLC), 97–117 (GAYL…LFFL), and 149–169 (VVCY…LFYF). The Cytoplasmic segment spans residues 170-223 (SQSFQQPLPWDQCPLVKNASHTFVEPECEQSSATTYYWYREALNISSSISESGG). Helical transmembrane passes span 224–244 (LNWK…LAMI) and 253–273 (IIYF…IRAL). N-linked (GlcNAc...) asparagine glycosylation occurs at Asn-276. Transmembrane regions (helical) follow at residues 302 to 322 (AATQ…AFSS) and 335 to 355 (VLVS…VFAV). The Cytoplasmic portion of the chain corresponds to 356-458 (LGFKANVINE…AMTHFPASPF (103 aa)). The next 5 helical transmembrane spans lie at 459–479 (WSVM…FGTI), 494–514 (KEIL…IFVQ), 530–550 (TLPL…VYGI), 575–595 (YVSP…MGLS), and 619–639 (LVVC…VFIV). The Extracellular portion of the chain corresponds to 640–730 (RRFNLIDDSS…IMPDMPESDL (91 aa)). Ser-687, Ser-699, and Ser-701 each carry phosphoserine.

This sequence belongs to the sodium:neurotransmitter symporter (SNF) (TC 2.A.22) family. SLC6A15 subfamily.

It is found in the membrane. It carries out the reaction L-leucine(in) + Na(+)(in) = L-leucine(out) + Na(+)(out). The enzyme catalyses L-isoleucine(in) + Na(+)(in) = L-isoleucine(out) + Na(+)(out). It catalyses the reaction L-methionine(in) + Na(+)(in) = L-methionine(out) + Na(+)(out). The catalysed reaction is L-proline(in) + Na(+)(in) = L-proline(out) + Na(+)(out). It carries out the reaction L-alanine(in) + Na(+)(in) = L-alanine(out) + Na(+)(out). The enzyme catalyses L-asparagine(in) + Na(+)(in) = L-asparagine(out) + Na(+)(out). It catalyses the reaction L-valine(in) + Na(+)(in) = L-valine(out) + Na(+)(out). The catalysed reaction is L-cysteine(in) + Na(+)(in) = L-cysteine(out) + Na(+)(out). It carries out the reaction L-glutamine(in) + Na(+)(in) = L-glutamine(out) + Na(+)(out). The enzyme catalyses L-serine(in) + Na(+)(in) = L-serine(out) + Na(+)(out). It catalyses the reaction L-threonine(in) + Na(+)(in) = L-threonine(out) + Na(+)(out). The catalysed reaction is L-pipecolate(in) + Na(+)(in) = L-pipecolate(out) + Na(+)(out). It carries out the reaction L-phenylalanine(in) + Na(+)(in) = L-phenylalanine(out) + Na(+)(out). Functions as a sodium-dependent neutral amino acid transporter. Exhibits preference for the branched-chain amino acids, particularly leucine, valine and isoleucine and methionine. Can also transport low-affinity substrates such as alanine, phenylalanine, glutamine and pipecolic acid. Mediates the saturable, pH-sensitive and electrogenic cotransport of proline and sodium ions with a stoichiometry of 1:1. May have a role as transporter for neurotransmitter precursors into neurons. In contrast to other members of the neurotransmitter transporter family, does not appear to be chloride-dependent. The chain is Sodium-dependent neutral amino acid transporter B(0)AT2 (SLC6A15) from Pongo abelii (Sumatran orangutan).